The chain runs to 412 residues: Imidazolonepropionase (412 aa).

Positions 71 and 73 each coordinate Fe(3+). Zn(2+) is bound by residues His-71 and His-73. The 4-imidazolone-5-propanoate site is built by Arg-80, Tyr-143, and His-176. N-formimidoyl-L-glutamate is bound at residue Tyr-143. His-241 is a binding site for Fe(3+). Residue His-241 participates in Zn(2+) binding. Residue Gln-244 participates in 4-imidazolone-5-propanoate binding. Asp-316 provides a ligand contact to Fe(3+). Asp-316 is a binding site for Zn(2+). 2 residues coordinate N-formimidoyl-L-glutamate: Asn-318 and Gly-320. Thr-321 contacts 4-imidazolone-5-propanoate.

It belongs to the metallo-dependent hydrolases superfamily. HutI family. Requires Zn(2+) as cofactor. The cofactor is Fe(3+).

It is found in the cytoplasm. The enzyme catalyses 4-imidazolone-5-propanoate + H2O = N-formimidoyl-L-glutamate. It functions in the pathway amino-acid degradation; L-histidine degradation into L-glutamate; N-formimidoyl-L-glutamate from L-histidine: step 3/3. Catalyzes the hydrolytic cleavage of the carbon-nitrogen bond in imidazolone-5-propanoate to yield N-formimidoyl-L-glutamate. It is the third step in the universal histidine degradation pathway. The chain is Imidazolonepropionase from Aromatoleum aromaticum (strain DSM 19018 / LMG 30748 / EbN1) (Azoarcus sp. (strain EbN1)).